Consider the following 382-residue polypeptide: Alcohol dehydrogenase 4 (382 aa).

Belongs to the iron-containing alcohol dehydrogenase family. As to quaternary structure, homodimer. Requires Zn(2+) as cofactor. It depends on Fe(2+) as a cofactor.

Its subcellular location is the mitochondrion. The enzyme catalyses a primary alcohol + NAD(+) = an aldehyde + NADH + H(+). It carries out the reaction a secondary alcohol + NAD(+) = a ketone + NADH + H(+). Its activity is regulated as follows. Inhibited by EDTA. Reduces acetaldehyde to ethanol during glucose fermentation. Specific for ethanol. Shows drastically reduced activity towards primary alcohols from 4 carbon atoms upward. Isomers of aliphatic alcohol, as well as secondary alcohols and glycerol are not used at all. The polypeptide is Alcohol dehydrogenase 4 (ADH4) (Saccharomyces cerevisiae (strain YJM789) (Baker's yeast)).